The following is a 464-amino-acid chain: UDP-N-acetylmuramoylalanine--D-glutamate ligase (464 aa).

ATP is bound at residue 127–133; it reads GSNGKST.

The protein belongs to the MurCDEF family.

The protein resides in the cytoplasm. The enzyme catalyses UDP-N-acetyl-alpha-D-muramoyl-L-alanine + D-glutamate + ATP = UDP-N-acetyl-alpha-D-muramoyl-L-alanyl-D-glutamate + ADP + phosphate + H(+). It participates in cell wall biogenesis; peptidoglycan biosynthesis. Its function is as follows. Cell wall formation. Catalyzes the addition of glutamate to the nucleotide precursor UDP-N-acetylmuramoyl-L-alanine (UMA). This chain is UDP-N-acetylmuramoylalanine--D-glutamate ligase, found in Roseobacter denitrificans (strain ATCC 33942 / OCh 114) (Erythrobacter sp. (strain OCh 114)).